The following is a 583-amino-acid chain: MGLFTVTKKATTPFEGQKPGTSGLRKKVTVFQQPHYLQNFVQSTFNALPADQVKGATIVVSGDGRYFSKDAVQIITKMAAANGVRRVWVGQNSLMSTPAVSAVIRERIGADGSKATGAFILTASHNPGGPTEDFGIKYNMGNGGPAPESVTDKIFSNTTTISEYLISEDLPDVDISVVGVTSFSGPEGPFDVDVFDSSVNYIKLMKTIFDFEAIKKLLTSPKFTFCYDALHGVAGAYAKHIFVEELGADESSLLNCVPKEDFGGGHPDPNLTYAKELVERMGLGKSSSNVEPPEFGAAADGDADRNMILGKRFFVTPSDSVAIIAANAVQSIPYFASGLKGVARSMPTSAALDVVAKNLNLKFFEVPTGWKFFGNLMDAGMCSICGEESFGTGSDHIREKDGIWAVLAWLSIIAFKNKDNLGGDKLVTVEDIVRQHWATYGRHYYTRYDYENVDAGAAKELMANLVSMQSSLSDVNKLIKEIRSDVSEVVAADEFEYKDPVDGSVSKHQGIRYLFGDGSRLVFRLSGTGSVGATIRVYIEQYEKDSSKTGRDSQEALAPLVDVALKLSKMQEYTGRSAPTVIT.

The alpha-D-glucose 1,6-bisphosphate site is built by Arg-25 and Ser-124. Ser-124 (phosphoserine intermediate) is an active-site residue. 4 residues coordinate Mg(2+): Ser-124, Asp-300, Asp-302, and Asp-304. Ser-124 bears the Phosphoserine mark. Asp-304, Arg-305, Thr-368, Glu-387, Ser-389, and Lys-400 together coordinate alpha-D-glucose 1,6-bisphosphate.

Belongs to the phosphohexose mutase family. As to quaternary structure, monomer. It depends on Mg(2+) as a cofactor.

Its subcellular location is the cytoplasm. The catalysed reaction is alpha-D-glucose 1-phosphate = alpha-D-glucose 6-phosphate. It catalyses the reaction O-phospho-L-seryl-[protein] + alpha-D-glucose 1-phosphate = alpha-D-glucose 1,6-bisphosphate + L-seryl-[protein]. The enzyme catalyses alpha-D-glucose 1,6-bisphosphate + L-seryl-[protein] = O-phospho-L-seryl-[protein] + alpha-D-glucose 6-phosphate. Functionally, catalyzes the reversible isomerization of alpha-D-glucose 1-phosphate to alpha-D-glucose 6-phosphate. The mechanism proceeds via the intermediate compound alpha-D-glucose 1,6-bisphosphate. This enzyme participates in both the breakdown and synthesis of glucose. The polypeptide is Phosphoglucomutase, cytoplasmic 2 (Zea mays (Maize)).